The chain runs to 552 residues: Macrophage colony-stimulating factor 1 (552 aa).

The first 32 residues, 1–32 (MTARGAAGRCPSSTWLGSRLLLVCLLMSRSIA), serve as a signal peptide directing secretion. Over 33–492 (KEVSEHCSHM…EGSSDPQIPE (460 aa)) the chain is Extracellular. 3 disulfides stabilise this stretch: cysteine 39–cysteine 122, cysteine 80–cysteine 171, and cysteine 134–cysteine 178. 3 N-linked (GlcNAc...) asparagine glycosylation sites follow: asparagine 107, asparagine 154, and asparagine 172. The segment covering 197–207 (TPSSDPASASP) has biased composition (low complexity). The tract at residues 197–293 (TPSSDPASAS…GGPVPGVEDI (97 aa)) is disordered. Residues 254–267 (PRSTCQTLESTEQP) show a composition bias toward polar residues. The span at 268 to 278 (NHGDRLTEDSQ) shows a compositional bias: basic and acidic residues. O-linked (Xyl...) (chondroitin sulfate) serine glycosylation occurs at serine 308. Disordered regions lie at residues 321-412 (KFSP…RVSN) and 439-465 (GKRS…ARPV). 3 stretches are compositionally biased toward basic and acidic residues: residues 350 to 364 (STED…DRPL), 382 to 396 (EKTD…DHQE), and 439 to 450 (GKRSTRDRRSPA). O-linked (GalNAc...) threonine glycosylation is present at threonine 360. Residues 493–515 (SVFHLLVPGIILVLLTVGGLLFY) traverse the membrane as a helical segment. Residues 516-552 (KWKWRSHRDPQTLDSSVGRPEDSSLTQDEDRQVELPV) lie on the Cytoplasmic side of the membrane. The disordered stretch occupies residues 525-552 (PQTLDSSVGRPEDSSLTQDEDRQVELPV). Positions 543–552 (DEDRQVELPV) are enriched in basic and acidic residues.

As to quaternary structure, homodimer or heterodimer; disulfide-linked. Likely to exist in multiple forms: homodimer consisting of 2 identical 150-200 kDa proteoglycan subunits, heterodimer consisting of a 150-200 kDa proteoglycan subunit and a truncated 43 kDa subunit, and homodimer consisting of 2 identical 43 kDa subunits. Interacts with CSF1R. N-glycosylated. In terms of processing, O-glycosylated; contains chondroitin sulfate.

The protein localises to the cell membrane. The protein resides in the secreted. It localises to the extracellular space. In terms of biological role, cytokine that plays an essential role in the regulation of survival, proliferation and differentiation of hematopoietic precursor cells, especially mononuclear phagocytes, such as macrophages and monocytes. Promotes the release of pro-inflammatory chemokines, and thereby plays an important role in innate immunity and in inflammatory processes. Plays an important role in the regulation of osteoclast proliferation and differentiation, the regulation of bone resorption, and is required for normal bone development. Required for normal male and female fertility. Promotes reorganization of the actin cytoskeleton, regulates formation of membrane ruffles, cell adhesion and cell migration. Plays a role in lipoprotein clearance. In Mus musculus (Mouse), this protein is Macrophage colony-stimulating factor 1 (Csf1).